The chain runs to 248 residues: Probable transcriptional regulatory protein PHZ_c3068 (248 aa).

It belongs to the TACO1 family.

The protein localises to the cytoplasm. The sequence is that of Probable transcriptional regulatory protein PHZ_c3068 from Phenylobacterium zucineum (strain HLK1).